Reading from the N-terminus, the 138-residue chain is Large ribosomal subunit protein uL16 (138 aa).

Positions 1-15 (MLSPKKVKYRKKQRG) are enriched in basic residues. Residues 1 to 21 (MLSPKKVKYRKKQRGRLSGEA) are disordered.

Belongs to the universal ribosomal protein uL16 family. Part of the 50S ribosomal subunit.

In terms of biological role, binds 23S rRNA and is also seen to make contacts with the A and possibly P site tRNAs. The protein is Large ribosomal subunit protein uL16 of Borreliella burgdorferi (strain ATCC 35210 / DSM 4680 / CIP 102532 / B31) (Borrelia burgdorferi).